Here is a 382-residue protein sequence, read N- to C-terminus: MSTYTRPVMLLLSGLLLLTLAIAVLNTLVPLWLAQEHMSTWQVGVVSSSYFTGNLVGTLLTGYVIKRIGFNRSYYLASFIFAAGCAGLGLMIGFWSWLAWRFVAGVGCAMIWVVVESALMCSGTSRNRGRLLAAYMMVYYVGTFLGQLLVSKVSTELMSVLPWVTGLTLAGILPLLFTRVLNQQAENHDSTSITAMLKLRQARLGVNGCIISGIVLGSLYGLMPLYLNHKGVSNASIGFWMAVLVSAGILGQWPIGRLADKFGRLLVLRVQVFVVILGSIAMLSQAAMAPALFILGAAGFTLYPVAMAWACEKVEHHQLVAMNQALLLSYTVGSLLGPSFTAMLMQNFSDNLLFIMIASVSFIYLLMLLRNAGHTPKPVAHV.

12 helical membrane-spanning segments follow: residues 14-34 (GLLL…LWLA), 45-65 (VVSS…GYVI), 79-99 (FIFA…SWLA), 102-122 (FVAG…LMCS), 131-151 (LLAA…LLVS), 157-177 (LMSV…PLLF), 204-224 (LGVN…GLMP), 235-255 (ASIG…QWPI), 270-290 (VQVF…AMAP), 291-311 (ALFI…AWAC), 325-345 (ALLL…AMLM), and 348-368 (FSDN…LLML).

This sequence belongs to the major facilitator superfamily. YcaD (TC 2.A.1.26) family.

It localises to the cell inner membrane. This is an uncharacterized protein from Shigella sonnei (strain Ss046).